A 351-amino-acid polypeptide reads, in one-letter code: Putative [LysW]-L-2-aminoadipate/[LysW]-L-glutamate phosphate reductase (351 aa).

NADP(+) contacts are provided by residues 10 to 13 (SGFT) and 34 to 36 (SRK). The active site involves cysteine 151. Residue asparagine 318 coordinates NADP(+).

It belongs to the NAGSA dehydrogenase family. Type 1 subfamily. LysY sub-subfamily.

It is found in the cytoplasm. The catalysed reaction is [amino-group carrier protein]-C-terminal-N-(1-carboxy-5-oxopentan-1-yl)-L-glutamine + phosphate + NADP(+) = [amino-group carrier protein]-C-terminal-N-(1-carboxy-5-phosphooxy-5-oxopentan-1-yl)-L-glutamine + NADPH + H(+). The enzyme catalyses [amino-group carrier protein]-C-terminal-gamma-(L-glutamyl-5-semialdehyde)-L-glutamate + phosphate + NADP(+) = [amino-group carrier protein]-C-terminal-gamma-(5-phospho-L-glutamyl)-L-glutamate + NADPH + H(+). It participates in amino-acid biosynthesis; L-lysine biosynthesis via AAA pathway; L-lysine from L-alpha-aminoadipate (Thermus route): step 3/5. Its pathway is amino-acid biosynthesis; L-arginine biosynthesis. Involved in both the arginine and lysine biosynthetic pathways. The polypeptide is Putative [LysW]-L-2-aminoadipate/[LysW]-L-glutamate phosphate reductase (Pyrobaculum calidifontis (strain DSM 21063 / JCM 11548 / VA1)).